The chain runs to 259 residues: MNSDVSSSEHELSQDGSSQNNPSENFVSSSNSNESVNQVELSDNPEVEHQVKNDSVDTAKEQSSTSCESNIKGSDTEARLQQLEKEHETLNSQYMRIAADFDNFRKRQTRDQDDLKIQLTCTTLSEILPIVDNFERARQQLNPEGEEAQALHRSYQGLYKQLVEVLKNLGVAPMRVVDQAFDPSLHEAVMREPSDEKAEDIVIEELQRGYHLNGRVLRHALVKVSMGPGPKAVNEEIPDQSASNQELSESVDGPTKDEN.

Disordered stretches follow at residues 1–75 (MNSD…KGSD) and 227–259 (GPGP…KDEN). The segment covering 20–40 (NNPSENFVSSSNSNESVNQVE) has biased composition (low complexity). The segment covering 46–60 (EVEHQVKNDSVDTAK) has biased composition (basic and acidic residues). Residues 61–73 (EQSSTSCESNIKG) are compositionally biased toward polar residues.

Belongs to the GrpE family. As to quaternary structure, homodimer.

The protein localises to the cytoplasm. Participates actively in the response to hyperosmotic and heat shock by preventing the aggregation of stress-denatured proteins, in association with DnaK and GrpE. It is the nucleotide exchange factor for DnaK and may function as a thermosensor. Unfolded proteins bind initially to DnaJ; upon interaction with the DnaJ-bound protein, DnaK hydrolyzes its bound ATP, resulting in the formation of a stable complex. GrpE releases ADP from DnaK; ATP binding to DnaK triggers the release of the substrate protein, thus completing the reaction cycle. Several rounds of ATP-dependent interactions between DnaJ, DnaK and GrpE are required for fully efficient folding. The chain is Protein GrpE from Prochlorococcus marinus (strain NATL1A).